A 1080-amino-acid polypeptide reads, in one-letter code: Headcase protein (1080 aa).

Disordered stretches follow at residues 1–27, 181–277, 310–335, 655–693, 798–826, 891–916, and 940–974; these read MAPR…LQQQ, IYLN…GNNG, SLSS…ISVS, PLES…QPPK, SKYQ…QHAT, SGCS…DGSK, and QRQQ…NGWS. Over residues 181–197 the composition is skewed to polar residues; that stretch reads IYLNGSGNRPTLANGSL. A compositionally biased stretch (gly residues) spans 218-228; it reads NGGGGGGGAGV. The segment covering 232–251 has biased composition (polar residues); it reads TKTPLSNNNGNSYAGLTPNP. A compositionally biased stretch (low complexity) spans 263–277; sequence NNGNTASNGSSGNNG. Polar residues predominate over residues 663–688; it reads GATTTQVPNAQGSPTASGCSSNTIAS. Residues 801 to 826 are compositionally biased toward low complexity; the sequence is QQQQHQQQQQQRQQQHNLQPQQQHAT. Residues 900-913 are compositionally biased toward polar residues; that stretch reads QPSLSPTASSNGND. The span at 941 to 974 shows a compositional bias: low complexity; the sequence is RQQPPQQQVPQQQPHAASPTASLTSSSSSSNGWS.

As to expression, expressed in all imaginal cells of the embryo and larvae. Expressed in a subset of tracheal fusion cells from stage 14 to the end of embryogenesis in metameres 2-9, lateral trunk and ventral anastomoses.

It is found in the cytoplasm. Functionally, required for imaginal cell differentiation, may be involved in hormonal responsiveness during metamorphosis. Involved in an inhibitory signaling mechanism to determine the number of cells that will form unicellular sprouts in the trachea. Regulated by transcription factor esg. The longer hdc protein is completely functional and the shorter protein carries some function. The chain is Headcase protein from Drosophila melanogaster (Fruit fly).